The chain runs to 61 residues: Probable tautomerase SAV1363 (61 aa).

P2 functions as the Proton acceptor; via imino nitrogen in the catalytic mechanism.

The protein belongs to the 4-oxalocrotonate tautomerase family.

The chain is Probable tautomerase SAV1363 from Staphylococcus aureus (strain Mu50 / ATCC 700699).